The chain runs to 471 residues: Putative multidrug resistance protein MdtD (471 aa).

Residues 1–11 (MTDLPDSTRWR) lie on the Periplasmic side of the membrane. A helical transmembrane segment spans residues 12 to 32 (LWIVAFGFFMQSLDTTIVNTA). Topologically, residues 33–48 (LPSMAQSLGESPLHMH) are cytoplasmic. Residues 49 to 69 (MVIVSYVLTVAVMLPASGWLA) traverse the membrane as a helical segment. At 70-76 (DKVGVRN) the chain is on the periplasmic side. The chain crosses the membrane as a helical span at residues 77-97 (IFFTAIVLFTLGSLFCALSGT). Residues 98-101 (LNEL) are Cytoplasmic-facing. The helical transmembrane segment at 102–124 (LLARALQGVGGAMMVPVGRLTVM) threads the bilayer. At 125–137 (KIVPREQYMAAMT) the chain is on the periplasmic side. The chain crosses the membrane as a helical span at residues 138–158 (FVTLPGQVGPLLGPALGGLLV). Residues 159–164 (EYASWH) are Cytoplasmic-facing. A helical transmembrane segment spans residues 165–185 (WIFLINIPVGIIGAIATLMLM). Residues 186–196 (PNYTMQTRRFD) are Periplasmic-facing. A helical transmembrane segment spans residues 197-217 (LSGFLLLAVGMAVLTLALDGS). At 218 to 224 (KGTGLSP) the chain is on the cytoplasmic side. A helical membrane pass occupies residues 225-245 (LAIAGLVAVGVVALVLYLLHA). At 246-262 (QNNNRALFSLKLFRTRT) the chain is on the periplasmic side. A helical membrane pass occupies residues 263 to 283 (FSLGLAGSFAGRIGSGMLPFM). Residues 284–285 (TP) are Cytoplasmic-facing. The chain crosses the membrane as a helical span at residues 286 to 306 (VFLQIGLGFSPFHAGLMMIPM). The Periplasmic segment spans residues 307-341 (VLGSMGMKRIVVQVVNRFGYRRVLVATTLGLSLVT). The helical transmembrane segment at 342–362 (LLFMTTALLGWYYVLPFVLFL) threads the bilayer. The Cytoplasmic portion of the chain corresponds to 363–395 (QGMVNSTRFSSMNTLTLKDLPDNLASSGNSLLS). Residues 396–416 (MIMQLSMSIGVTIAGLLLGLF) form a helical membrane-spanning segment. Over 417–430 (GSQHVSVDSGTTQT) the chain is Periplasmic. The chain crosses the membrane as a helical span at residues 431–451 (VFMYTWLSMASIIALPAFIFA). Over 452-471 (RVPNDTHQNVAISRRKRSAQ) the chain is Cytoplasmic.

Belongs to the major facilitator superfamily. TCR/Tet family.

It localises to the cell inner membrane. The chain is Putative multidrug resistance protein MdtD from Escherichia coli O6:K15:H31 (strain 536 / UPEC).